Consider the following 27-residue polypeptide: Metalloproteinase inhibitor 1 (27 aa).

Acidic residues predominate over residues 1-12; the sequence is IEPERQEEEEEE. A disordered region spans residues 1-27; sequence IEPERQEEEEEETRQRVRRGQVRQQQQ.

Metalloproteinase inhibitor, active on a globulinase from L.albus seeds, thermolysin and gelatinase B. This Lupinus albus (White lupine) protein is Metalloproteinase inhibitor 1.